We begin with the raw amino-acid sequence, 201 residues long: Histone chaperone asf1a-A (201 aa).

It belongs to the ASF1 family. Interacts with histone H3 (including both histone H3.1 and H3.3) and histone H4. Interacts with hira and p60.

It is found in the nucleus. Its function is as follows. Histone chaperone that facilitates histone deposition and histone exchange and removal during nucleosome assembly and disassembly. Not critical for histone deposition during nucleosome assembly. The sequence is that of Histone chaperone asf1a-A (asf1aa) from Xenopus laevis (African clawed frog).